Reading from the N-terminus, the 303-residue chain is Methionyl-tRNA formyltransferase (303 aa).

Residue 106–109 coordinates (6S)-5,6,7,8-tetrahydrofolate; that stretch reads SLLP.

Belongs to the Fmt family.

It catalyses the reaction L-methionyl-tRNA(fMet) + (6R)-10-formyltetrahydrofolate = N-formyl-L-methionyl-tRNA(fMet) + (6S)-5,6,7,8-tetrahydrofolate + H(+). Its function is as follows. Attaches a formyl group to the free amino group of methionyl-tRNA(fMet). The formyl group appears to play a dual role in the initiator identity of N-formylmethionyl-tRNA by promoting its recognition by IF2 and preventing the misappropriation of this tRNA by the elongation apparatus. The protein is Methionyl-tRNA formyltransferase of Thermosipho melanesiensis (strain DSM 12029 / CIP 104789 / BI429).